A 151-amino-acid polypeptide reads, in one-letter code: U1 small nuclear ribonucleoprotein C (151 aa).

The Matrin-type zinc finger occupies 4–36 (YYCDYCDTYLTHDSPSVRKTHCTGRKHKDNVKF).

It belongs to the U1 small nuclear ribonucleoprotein C family. U1 snRNP is composed of the 7 core Sm proteins B/B', D1, D2, D3, E, F and G that assemble in a heptameric protein ring on the Sm site of the small nuclear RNA to form the core snRNP, and at least 3 U1 snRNP-specific proteins U1-70K, U1-A and U1-C. U1-C interacts with U1 snRNA and the 5' splice-site region of the pre-mRNA.

The protein resides in the nucleus. Its function is as follows. Component of the spliceosomal U1 snRNP, which is essential for recognition of the pre-mRNA 5' splice-site and the subsequent assembly of the spliceosome. U1-C is directly involved in initial 5' splice-site recognition for both constitutive and regulated alternative splicing. The interaction with the 5' splice-site seems to precede base-pairing between the pre-mRNA and the U1 snRNA. Stimulates commitment or early (E) complex formation by stabilizing the base pairing of the 5' end of the U1 snRNA and the 5' splice-site region. The protein is U1 small nuclear ribonucleoprotein C of Anopheles darlingi (Mosquito).